Reading from the N-terminus, the 289-residue chain is Probable endonuclease 4 (289 aa).

Zn(2+) is bound by residues H76, H116, E152, D186, H189, H220, D233, H235, and E265.

The protein belongs to the AP endonuclease 2 family. It depends on Zn(2+) as a cofactor.

It catalyses the reaction Endonucleolytic cleavage to 5'-phosphooligonucleotide end-products.. Its function is as follows. Endonuclease IV plays a role in DNA repair. It cleaves phosphodiester bonds at apurinic or apyrimidinic (AP) sites, generating a 3'-hydroxyl group and a 5'-terminal sugar phosphate. This chain is Probable endonuclease 4, found in Malacoplasma penetrans (strain HF-2) (Mycoplasma penetrans).